The primary structure comprises 510 residues: Aspartate kinase FUB3 (510 aa).

2 ACT domains span residues 372 to 440 (ILSN…VLPD) and 446 to 510 (LVGA…KNAM).

It belongs to the aspartokinase family.

The catalysed reaction is L-aspartate + ATP = 4-phospho-L-aspartate + ADP. It participates in mycotoxin biosynthesis. Aspartate kinase; part of the gene cluster that mediates the biosynthesis of fusaric acid, a mycotoxin with low to moderate toxicity to animals and humans, but with high phytotoxic properties. L-aspartate is suggested as fusaric acid amino acid precursor that is activated and further processed to O-acetyl-L-homoserine by cluster enzymes aspartate kinase FUB3 and homoserine O-acetyltransferase FUB5, as well as enzymes of the primary metabolism. The polyketide synthase (PKS) FUB1 generates the triketide trans-2-hexenal which is presumptively released by the hydrolase FUB4 and linked to the NRPS-bound amino acid precursor by NAD(P)-dependent dehydrogenase FUB6. FUB1, FUB4, and the non-canonical NRPS Fub8 may form an enzyme complex. Further processing of the NRPS-bound intermediate might be carried out by FUB6 and the sulfhydrylase FUB7, enabling a spontaneous electrocyclization to close the carbon backbone of fusaric acid. Dihydrofusaric acid is likely to be released via reduction by the thioester reductase (TR) domain of FUB8 whereupon the final oxidation to fusaric acid may (also) be performed by the FMN-dependent dehydrogenase FUB9. This is Aspartate kinase FUB3 from Gibberella moniliformis (strain M3125 / FGSC 7600) (Maize ear and stalk rot fungus).